Reading from the N-terminus, the 208-residue chain is V-type ATP synthase subunit D (208 aa).

Belongs to the V-ATPase D subunit family.

In terms of biological role, produces ATP from ADP in the presence of a proton gradient across the membrane. This Chlamydia caviae (strain ATCC VR-813 / DSM 19441 / 03DC25 / GPIC) (Chlamydophila caviae) protein is V-type ATP synthase subunit D.